Consider the following 355-residue polypeptide: Glucose-6-phosphatase 2 (355 aa).

The Lumenal portion of the chain corresponds to 1-24 (MDFLHRNGVLIIQHLQKDYRAYYT). Residues 25–45 (FLNFMSNVGDPRNIFFIYFPL) traverse the membrane as a helical segment. The Cytoplasmic portion of the chain corresponds to 46-56 (CFQFNQTVGTK). The helical transmembrane segment at 57–77 (MIWVAVIGDWLNLIFKWILFG) threads the bilayer. The Lumenal segment spans residues 78-115 (HRPYWWVQETQIYPNHSSPCLEQFPTTCETGPGSPSGH). Residue R79 coordinates substrate. Residue N92 is glycosylated (N-linked (GlcNAc...) asparagine). The Proton donor role is filled by H115. Residues 116–136 (AMGASCVWYVMVTAALSHTVC) form a helical membrane-spanning segment. Topologically, residues 137 to 146 (GMDKFSITLH) are cytoplasmic. The chain crosses the membrane as a helical span at residues 147–167 (RLTWSFLWSVFWLIQISVCIS). Position 168 (R168) is a topological domain, lumenal. R168 contributes to the substrate binding site. The chain crosses the membrane as a helical span at residues 169–189 (VFIATHFPHQVILGVIGGMLV). H174 functions as the Nucleophile in the catalytic mechanism. The Cytoplasmic portion of the chain corresponds to 190–211 (AEAFEHTPGIQTASLGTYLKTN). A helical transmembrane segment spans residues 212–232 (LFLFLFAVGFYLLLRVLNIDL). The Lumenal portion of the chain corresponds to 233 to 261 (LWSVPIAKKWCANPDWIHIDTTPFAGLVR). A helical transmembrane segment spans residues 262–282 (NLGVLFGLGFAINSEMFLLSC). The Cytoplasmic portion of the chain corresponds to 283-293 (RGGNNYTLSFR). A helical transmembrane segment spans residues 294–314 (LLCALTSLTILQLYHFLQIPT). Over 315–318 (HEEH) the chain is Lumenal. A helical membrane pass occupies residues 319-339 (LFYVLSFCKSASIPLTVVAFI). The Cytoplasmic segment spans residues 340-355 (PYSVHMLMKQSGKKSQ). A Prevents secretion from ER motif is present at residues 352 to 355 (KKSQ).

The protein belongs to the glucose-6-phosphatase family. In terms of processing, N-glycosylated; the non-glycosylated form is more unstable and is degraded through the proteasome. As to expression, specifically expressed in pancreas and also detected to a lower extent in testis. Expressed by most islet cells in the pancreas (at protein level).

The protein localises to the endoplasmic reticulum membrane. It carries out the reaction D-glucose 6-phosphate + H2O = D-glucose + phosphate. It functions in the pathway carbohydrate biosynthesis; gluconeogenesis. May hydrolyze glucose-6-phosphate to glucose in the endoplasmic reticulum. May be responsible for glucose production through glycogenolysis and gluconeogenesis. The protein is Glucose-6-phosphatase 2 (G6PC2) of Homo sapiens (Human).